We begin with the raw amino-acid sequence, 496 residues long: uncharacterized protein (496 aa).

Helical transmembrane passes span 5–25 (LTAL…GFLA), 45–65 (FGGL…YTFL), 77–97 (VAFF…FFLP), 127–147 (LVAI…LSGI), 161–181 (VKFV…FSGI), 193–213 (ILVW…HFNG), 239–259 (IPWF…WAHA), 278–298 (FLPL…IAFL), 325–345 (FAYA…AIGA), 374–394 (MVFV…TALV), 396–416 (LQLL…VSLF), 424–444 (ATVI…ITQS), and 450–470 (EGFW…PLFV).

It belongs to the sodium:solute symporter (SSF) (TC 2.A.21) family.

The protein resides in the cell membrane. This is an uncharacterized protein from Bacillus subtilis (strain 168).